The primary structure comprises 482 residues: Aspartic proteinase 36 (482 aa).

Residues 1-27 (MVTTMDPSRISRIVAVVFVLVIQVVSG) form the signal peptide. N32 is a glycosylation site (N-linked (GlcNAc...) asparagine). Positions 78–429 (YFTKIKLGSP…DLENEVIGWA (352 aa)) constitute a Peptidase A1 domain. Residue D96 is part of the active site. 3 N-linked (GlcNAc...) asparagine glycosylation sites follow: N178, N204, and N226. D310 is an active-site residue. The cysteines at positions 347 and 388 are disulfide-linked. N432 carries N-linked (GlcNAc...) asparagine glycosylation. S456 is lipidated: GPI-anchor amidated serine. Positions 457-482 (AASSVMNGTLVTLLSILIWVFHSFTS) are cleaved as a propeptide — removed in mature form. N-linked (GlcNAc...) asparagine glycosylation is present at N463.

This sequence belongs to the peptidase A1 family. As to expression, highly expressed in pollen and pollen tubes. Mostly expressed in roots, flowers and inflorescence, and at lower levels in stems, seedlings and siliques.

The protein resides in the cell membrane. It localises to the cytoplasm. The protein localises to the cytosol. In terms of biological role, displays aspartic proteolytic activity. Together with A39, contributes to pollen and ovule development, including the apical cell wall constitution of the growing pollen tubes. The sequence is that of Aspartic proteinase 36 from Arabidopsis thaliana (Mouse-ear cress).